Here is a 541-residue protein sequence, read N- to C-terminus: CTP synthase (541 aa).

The tract at residues 1 to 268 (MAKFIFITGG…AEIVCRRLGL (268 aa)) is amidoligase domain. Serine 13 is a binding site for CTP. Serine 13 lines the UTP pocket. Residues 14 to 19 (GLGKGI) and aspartate 71 each bind ATP. The Mg(2+) site is built by aspartate 71 and glutamate 141. CTP-binding positions include 148–150 (DIE), 189–194 (KTKPTQ), and lysine 225. UTP contacts are provided by residues 189-194 (KTKPTQ) and lysine 225. Positions 293–539 (EIALVGKYVA…IKAALEYRAG (247 aa)) constitute a Glutamine amidotransferase type-1 domain. Residue glycine 359 coordinates L-glutamine. Catalysis depends on cysteine 386, which acts as the Nucleophile; for glutamine hydrolysis. L-glutamine is bound by residues 387-390 (MGMQ), glutamate 410, and arginine 467. Catalysis depends on residues histidine 512 and glutamate 514.

Belongs to the CTP synthase family. As to quaternary structure, homotetramer.

The enzyme catalyses UTP + L-glutamine + ATP + H2O = CTP + L-glutamate + ADP + phosphate + 2 H(+). It catalyses the reaction L-glutamine + H2O = L-glutamate + NH4(+). It carries out the reaction UTP + NH4(+) + ATP = CTP + ADP + phosphate + 2 H(+). It functions in the pathway pyrimidine metabolism; CTP biosynthesis via de novo pathway; CTP from UDP: step 2/2. Its activity is regulated as follows. Allosterically activated by GTP, when glutamine is the substrate; GTP has no effect on the reaction when ammonia is the substrate. The allosteric effector GTP functions by stabilizing the protein conformation that binds the tetrahedral intermediate(s) formed during glutamine hydrolysis. Inhibited by the product CTP, via allosteric rather than competitive inhibition. Its function is as follows. Catalyzes the ATP-dependent amination of UTP to CTP with either L-glutamine or ammonia as the source of nitrogen. Regulates intracellular CTP levels through interactions with the four ribonucleotide triphosphates. The polypeptide is CTP synthase (Symbiobacterium thermophilum (strain DSM 24528 / JCM 14929 / IAM 14863 / T)).